The following is a 349-amino-acid chain: Phenylalanine--tRNA ligase alpha subunit (349 aa).

Position 259 (E259) interacts with Mg(2+).

It belongs to the class-II aminoacyl-tRNA synthetase family. Phe-tRNA synthetase alpha subunit type 1 subfamily. In terms of assembly, tetramer of two alpha and two beta subunits. Mg(2+) is required as a cofactor.

The protein localises to the cytoplasm. It catalyses the reaction tRNA(Phe) + L-phenylalanine + ATP = L-phenylalanyl-tRNA(Phe) + AMP + diphosphate + H(+). This is Phenylalanine--tRNA ligase alpha subunit from Lactobacillus gasseri (strain ATCC 33323 / DSM 20243 / BCRC 14619 / CIP 102991 / JCM 1131 / KCTC 3163 / NCIMB 11718 / NCTC 13722 / AM63).